The chain runs to 129 residues: Putative pre-16S rRNA nuclease (129 aa).

This sequence belongs to the YqgF nuclease family.

The protein localises to the cytoplasm. Its function is as follows. Could be a nuclease involved in processing of the 5'-end of pre-16S rRNA. This is Putative pre-16S rRNA nuclease from Campylobacter jejuni subsp. doylei (strain ATCC BAA-1458 / RM4099 / 269.97).